We begin with the raw amino-acid sequence, 227 residues long: PKHD-type hydroxylase NE2125 (227 aa).

Positions 78 to 179 (KIVPPFFNRY…RLACFMFIQS (102 aa)) constitute a Fe2OG dioxygenase domain. Residues His97, Asp99, and His160 each contribute to the Fe cation site. Position 170 (Arg170) interacts with 2-oxoglutarate.

Fe(2+) is required as a cofactor. It depends on L-ascorbate as a cofactor.

The polypeptide is PKHD-type hydroxylase NE2125 (Nitrosomonas europaea (strain ATCC 19718 / CIP 103999 / KCTC 2705 / NBRC 14298)).